The following is a 72-amino-acid chain: Long neurotoxin OH-5 (72 aa).

Cystine bridges form between Cys-3–Cys-22, Cys-15–Cys-43, Cys-28–Cys-32, Cys-47–Cys-58, and Cys-59–Cys-64.

It belongs to the three-finger toxin family. Long-chain subfamily. Type II alpha-neurotoxin sub-subfamily. In terms of tissue distribution, expressed by the venom gland.

It localises to the secreted. Functionally, binds with high affinity to muscular (alpha-1/CHRNA1) and neuronal (alpha-7/CHRNA7) nicotinic acetylcholine receptor (nAChR) and inhibits acetylcholine from binding to the receptor, thereby impairing neuromuscular and neuronal transmission. The polypeptide is Long neurotoxin OH-5 (Ophiophagus hannah (King cobra)).